A 223-amino-acid polypeptide reads, in one-letter code: Type III pantothenate kinase (223 aa).

17–24 (DIGNTHIH) contributes to the ATP binding site. Substrate is bound by residues tyrosine 81 and 85 to 88 (GIDR). The Proton acceptor role is filled by aspartate 87. Residue aspartate 102 coordinates K(+). Residue serine 105 participates in ATP binding. Threonine 157 provides a ligand contact to substrate.

It belongs to the type III pantothenate kinase family. In terms of assembly, homodimer. It depends on NH4(+) as a cofactor. The cofactor is K(+).

It localises to the cytoplasm. The enzyme catalyses (R)-pantothenate + ATP = (R)-4'-phosphopantothenate + ADP + H(+). It participates in cofactor biosynthesis; coenzyme A biosynthesis; CoA from (R)-pantothenate: step 1/5. Catalyzes the phosphorylation of pantothenate (Pan), the first step in CoA biosynthesis. This chain is Type III pantothenate kinase, found in Helicobacter pylori (strain HPAG1).